Here is a 278-residue protein sequence, read N- to C-terminus: Digeranylgeranylglyceryl phosphate synthase (278 aa).

7 helical membrane-spanning segments follow: residues 12-32 (LKNC…ASNF), 34-54 (FGAL…CGFG), 92-112 (IMIF…MAVL), 129-149 (IIGN…GGIA), 199-219 (IYIS…PYLT), 221-241 (IFGI…LAGF), and 257-277 (SKNI…GSIF).

This sequence belongs to the UbiA prenyltransferase family. DGGGP synthase subfamily. It depends on Mg(2+) as a cofactor.

Its subcellular location is the cell membrane. It catalyses the reaction sn-3-O-(geranylgeranyl)glycerol 1-phosphate + (2E,6E,10E)-geranylgeranyl diphosphate = 2,3-bis-O-(geranylgeranyl)-sn-glycerol 1-phosphate + diphosphate. It participates in membrane lipid metabolism; glycerophospholipid metabolism. Prenyltransferase that catalyzes the transfer of the geranylgeranyl moiety of geranylgeranyl diphosphate (GGPP) to the C2 hydroxyl of (S)-3-O-geranylgeranylglyceryl phosphate (GGGP). This reaction is the second ether-bond-formation step in the biosynthesis of archaeal membrane lipids. This chain is Digeranylgeranylglyceryl phosphate synthase, found in Methanococcus vannielii (strain ATCC 35089 / DSM 1224 / JCM 13029 / OCM 148 / SB).